A 157-amino-acid chain; its full sequence is Urease accessory protein UreE (157 aa).

The protein belongs to the UreE family.

It is found in the cytoplasm. Involved in urease metallocenter assembly. Binds nickel. Probably functions as a nickel donor during metallocenter assembly. In Paenarthrobacter aurescens (strain TC1), this protein is Urease accessory protein UreE.